We begin with the raw amino-acid sequence, 424 residues long: MSYVIDRRLNGKNKSTVNRQRFLRRYREHIKKAVEEAVSRRSIMDMEHGEQISIPGRDIDEPVLHHGRGGKQTIVHPGNKEFTAGEHIPRPQGGGGGGGGRGKAGNSGEGMDEFVFQITQEEFLEFMFEDLELPNLVKRHLTGADTFKTVRAGIANEGNPSRINIVRTLRSAHARRIALTGSSRALLREAQKELDRLRVEEPDNFTDIQEVEQEIERLKARINRLPFLDTFDLKYNLLVKQPNPSSKAVMFCLMDVSGSMTQATKDIAKRFFILLYLFLKRNYDRIEVVFIRHHTSAREVDEEEFFYSRETGGTIVSSALKLMQEIMAERYPASDWNIYAAQASDGDNWNDDSPICRDILSKQIMPHVQYYTYVEITPREHQALWYEYERIGEAYPDTFAQQQLVSAGDIYPVFRELFQRRLAT.

Residues 81–107 are disordered; it reads EFTAGEHIPRPQGGGGGGGGRGKAGNS. Residues 92–107 show a composition bias toward gly residues; sequence QGGGGGGGGRGKAGNS.

Belongs to the UPF0229 family.

In Pseudomonas putida (strain GB-1), this protein is UPF0229 protein PputGB1_0427.